The primary structure comprises 127 residues: Fluoride-specific ion channel FluC (127 aa).

Transmembrane regions (helical) follow at residues 7–27 (LILI…MGLI), 37–57 (FGTL…MAMI), 69–89 (LFMI…SAEV), and 102–122 (LGIM…GVLI). Positions 77 and 80 each coordinate Na(+).

Belongs to the fluoride channel Fluc/FEX (TC 1.A.43) family.

Its subcellular location is the cell inner membrane. The enzyme catalyses fluoride(in) = fluoride(out). With respect to regulation, na(+) is not transported, but it plays an essential structural role and its presence is essential for fluoride channel function. In terms of biological role, fluoride-specific ion channel. Important for reducing fluoride concentration in the cell, thus reducing its toxicity. The protein is Fluoride-specific ion channel FluC of Mannheimia succiniciproducens (strain KCTC 0769BP / MBEL55E).